The sequence spans 980 residues: GPI inositol-deacylase (980 aa).

The Cytoplasmic segment spans residues 1 to 7 (MFMFRNC). A helical membrane pass occupies residues 8-28 (AVLLVIGSICCFIYGLFRLHV). Residues 29-628 (EVEPNACRMT…EYSYSSALSR (600 aa)) lie on the Lumenal side of the membrane. Serine 170 is an active-site residue. Residues asparagine 427, asparagine 517, and asparagine 596 are each glycosylated (N-linked (GlcNAc...) asparagine). Residues 629–649 (LVLEFYGWLPAHLVCVLLIVL) traverse the membrane as a helical segment. Over 650 to 709 (RKQVETFYDVGTFRSLRPYVGYLQYTSLYIVTACRLLKKLIISSRVFPEPEPLDYSINVS) the chain is Cytoplasmic. Residues 710 to 730 (IVIHCAAIALSLLATLGTWLA) form a helical membrane-spanning segment. The Lumenal portion of the chain corresponds to 731 to 774 (LTLYGNAFYRLALRITRLSQATSNVMISIMTHLPITYGILTIAT). The chain crosses the membrane as a helical span at residues 775-795 (AMGTCSGVGLLLAFVFYFLML). The Cytoplasmic segment spans residues 796-867 (SNAYKDYLED…CVGLQNFSFH (72 aa)). A disordered region spans residues 821–853 (AVTEQEDATEEQNEEQNALKQNDEQKQQQQEEE). Residues 824-834 (EQEDATEEQNE) show a composition bias toward acidic residues. A helical membrane pass occupies residues 868–888 (VTLLLMLFVQLLLNAPSSLAW). At 889–895 (LRSRRHG) the chain is on the lumenal side. Residues 896–916 (INLPDPSLYPSIVVLASLSLL) traverse the membrane as a helical segment. Topologically, residues 917–929 (LQLRAPQKCQGYW) are cytoplasmic. The chain crosses the membrane as a helical span at residues 930 to 950 (MLSIAFYILAGVVLLYCQAAI). The Lumenal segment spans residues 951 to 954 (YRLT). The chain crosses the membrane as a helical span at residues 955–975 (YVIAGAFALLSAHQSLWILWG). Residues 976–980 (RVSRV) are Cytoplasmic-facing.

Belongs to the GPI inositol-deacylase family.

The protein resides in the endoplasmic reticulum membrane. Functionally, involved in inositol deacylation of GPI-anchored proteins. In Drosophila melanogaster (Fruit fly), this protein is GPI inositol-deacylase.